A 377-amino-acid polypeptide reads, in one-letter code: Cobalt-precorrin-5B C(1)-methyltransferase (377 aa).

The tract at residues 1 to 21 is disordered; sequence MNPVRQPYDLAAPAPNGMRRG.

This sequence belongs to the CbiD family.

The catalysed reaction is Co-precorrin-5B + S-adenosyl-L-methionine = Co-precorrin-6A + S-adenosyl-L-homocysteine. The protein operates within cofactor biosynthesis; adenosylcobalamin biosynthesis; cob(II)yrinate a,c-diamide from sirohydrochlorin (anaerobic route): step 6/10. In terms of biological role, catalyzes the methylation of C-1 in cobalt-precorrin-5B to form cobalt-precorrin-6A. The chain is Cobalt-precorrin-5B C(1)-methyltransferase from Chromobacterium violaceum (strain ATCC 12472 / DSM 30191 / JCM 1249 / CCUG 213 / NBRC 12614 / NCIMB 9131 / NCTC 9757 / MK).